Reading from the N-terminus, the 190-residue chain is Glutathione peroxidase 2 (190 aa).

Sec40 is an active-site residue. Residue Sec40 is a non-standard amino acid, selenocysteine.

Belongs to the glutathione peroxidase family. In terms of assembly, homotetramer. As to expression, mucosal epithelium of the gastrointestinal tract.

It is found in the cytoplasm. It localises to the cytosol. It catalyses the reaction 2 glutathione + H2O2 = glutathione disulfide + 2 H2O. The catalysed reaction is a hydroperoxy polyunsaturated fatty acid + 2 glutathione = a hydroxy polyunsaturated fatty acid + glutathione disulfide + H2O. It carries out the reaction tert-butyl hydroperoxide + 2 glutathione = tert-butanol + glutathione disulfide + H2O. The enzyme catalyses cumene hydroperoxide + 2 glutathione = 2-phenylpropan-2-ol + glutathione disulfide + H2O. It catalyses the reaction (13S)-hydroperoxy-(9Z,11E)-octadecadienoate + 2 glutathione = (13S)-hydroxy-(9Z,11E)-octadecadienoate + glutathione disulfide + H2O. The catalysed reaction is (5S)-hydroperoxy-(6E,8Z,11Z,14Z)-eicosatetraenoate + 2 glutathione = (5S)-hydroxy-(6E,8Z,11Z,14Z)-eicosatetraenoate + glutathione disulfide + H2O. It carries out the reaction (12R)-hydroperoxy-(5Z,8Z,10E,14Z)-eicosatetraenoate + 2 glutathione = (12R)-hydroxy-(5Z,8Z,10E,14Z)-eicosatetraenoate + glutathione disulfide + H2O. The enzyme catalyses (15S)-hydroperoxy-(5Z,8Z,11Z,13E)-eicosatetraenoate + 2 glutathione = (15S)-hydroxy-(5Z,8Z,11Z,13E)-eicosatetraenoate + glutathione disulfide + H2O. Its function is as follows. Catalyzes the reduction of hydroperoxides in a glutathione-dependent manner thus regulating cellular redox homeostasis. Can reduce small soluble hydroperoxide such as H2O2. Can reduce cumene hydroperoxide and tert-butyl hydroperoxide, as well as several fatty acid-derived hydroperoxides. Cannot reduce phosphatidycholine hydroperoxide. This chain is Glutathione peroxidase 2 (Gpx2), found in Rattus norvegicus (Rat).